The chain runs to 124 residues: UPF0102 protein HCH_05895 (124 aa).

It belongs to the UPF0102 family.

The polypeptide is UPF0102 protein HCH_05895 (Hahella chejuensis (strain KCTC 2396)).